Consider the following 437-residue polypeptide: 3-phosphoshikimate 1-carboxyvinyltransferase (437 aa).

3-phosphoshikimate contacts are provided by lysine 22, serine 23, and arginine 27. Position 22 (lysine 22) interacts with phosphoenolpyruvate. Residues glycine 96 and arginine 125 each contribute to the phosphoenolpyruvate site. Serine 170, glutamine 172, aspartate 323, and lysine 350 together coordinate 3-phosphoshikimate. Glutamine 172 contacts phosphoenolpyruvate. Aspartate 323 serves as the catalytic Proton acceptor. Positions 354 and 396 each coordinate phosphoenolpyruvate.

Belongs to the EPSP synthase family. In terms of assembly, monomer.

It localises to the cytoplasm. The catalysed reaction is 3-phosphoshikimate + phosphoenolpyruvate = 5-O-(1-carboxyvinyl)-3-phosphoshikimate + phosphate. It participates in metabolic intermediate biosynthesis; chorismate biosynthesis; chorismate from D-erythrose 4-phosphate and phosphoenolpyruvate: step 6/7. Its function is as follows. Catalyzes the transfer of the enolpyruvyl moiety of phosphoenolpyruvate (PEP) to the 5-hydroxyl of shikimate-3-phosphate (S3P) to produce enolpyruvyl shikimate-3-phosphate and inorganic phosphate. The polypeptide is 3-phosphoshikimate 1-carboxyvinyltransferase (Synechococcus sp. (strain RCC307)).